The sequence spans 281 residues: Nucleoid occlusion protein (281 aa).

Residues 145-164 (EALAQRLGKGQSTIANKLRL) constitute a DNA-binding region (H-T-H motif).

Belongs to the ParB family.

The protein resides in the cytoplasm. Its subcellular location is the nucleoid. Its function is as follows. Effects nucleoid occlusion by binding relatively nonspecifically to DNA and preventing the assembly of the division machinery in the vicinity of the nucleoid, especially under conditions that disturb the cell cycle. It helps to coordinate cell division and chromosome segregation by preventing the formation of the Z ring through the nucleoid, which would cause chromosome breakage. In Geobacillus sp. (strain WCH70), this protein is Nucleoid occlusion protein.